A 195-amino-acid polypeptide reads, in one-letter code: A-type ATP synthase subunit E (195 aa).

It belongs to the V-ATPase E subunit family. Has multiple subunits with at least A(3), B(3), C, D, E, F, H, I and proteolipid K(x).

The protein resides in the cell membrane. Functionally, component of the A-type ATP synthase that produces ATP from ADP in the presence of a proton gradient across the membrane. The protein is A-type ATP synthase subunit E of Staphylothermus marinus (strain ATCC 43588 / DSM 3639 / JCM 9404 / F1).